Reading from the N-terminus, the 742-residue chain is NAD(P)H-quinone oxidoreductase subunit 5, chloroplastic (742 aa).

Helical transmembrane passes span 9-29 (WIIPFLPLPVPLLIGAGLLFF), 39-59 (IWAFSSISLLSIVMIFSMKLA), 91-111 (PLTSIMSMLITTVAILVLIYS), 125-145 (FAYMSFFNTSMLGLVTSSNLI), 147-167 (IYIFWELVGMCSYLLIGFWFT), 185-205 (GDFGLLLGILGLYWITGSFEF), 224-244 (LFCILCAFLLFAGAVAKSAQF), 258-278 (TPISALIHAATMVAAGIFLVA), 280-300 (LLPLFVVIPYIMYVISFIGII), 327-347 (LGYMMLALGMGSYRTALFHLI), 354-374 (ALLFLASGSLIHSMGTIVGYS), 396-416 (TSFLIGTLSLCGIPPLACFWS), 425-445 (WVYSPIFAIIAYFTAGLTAFY), 549-569 (LFPLIILIMFTLFVGFIGIPF), 603-623 (FVINAIFSISIAFFGIFIAFF), and 721-741 (ISSYLFWYLLYVSIFLFIFTF).

This sequence belongs to the complex I subunit 5 family. As to quaternary structure, NDH is composed of at least 16 different subunits, 5 of which are encoded in the nucleus.

The protein localises to the plastid. It is found in the chloroplast thylakoid membrane. It catalyses the reaction a plastoquinone + NADH + (n+1) H(+)(in) = a plastoquinol + NAD(+) + n H(+)(out). The catalysed reaction is a plastoquinone + NADPH + (n+1) H(+)(in) = a plastoquinol + NADP(+) + n H(+)(out). NDH shuttles electrons from NAD(P)H:plastoquinone, via FMN and iron-sulfur (Fe-S) centers, to quinones in the photosynthetic chain and possibly in a chloroplast respiratory chain. The immediate electron acceptor for the enzyme in this species is believed to be plastoquinone. Couples the redox reaction to proton translocation, and thus conserves the redox energy in a proton gradient. This Spinacia oleracea (Spinach) protein is NAD(P)H-quinone oxidoreductase subunit 5, chloroplastic (ndhF).